We begin with the raw amino-acid sequence, 876 residues long: Leucine--tRNA ligase (876 aa).

Residues 42–52 (PYPSGKLHMGH) carry the 'HIGH' region motif. Residues 634 to 638 (KMSKS) carry the 'KMSKS' region motif. Lys637 is a binding site for ATP.

This sequence belongs to the class-I aminoacyl-tRNA synthetase family.

It localises to the cytoplasm. The catalysed reaction is tRNA(Leu) + L-leucine + ATP = L-leucyl-tRNA(Leu) + AMP + diphosphate. This Neisseria meningitidis serogroup C (strain 053442) protein is Leucine--tRNA ligase.